The primary structure comprises 628 residues: Dihydroxy-acid dehydratase (628 aa).

Residue aspartate 80 participates in Mg(2+) binding. Residue cysteine 121 coordinates [2Fe-2S] cluster. Residues aspartate 122 and lysine 123 each coordinate Mg(2+). Lysine 123 bears the N6-carboxylysine mark. Cysteine 207 contributes to the [2Fe-2S] cluster binding site. Residue glutamate 503 participates in Mg(2+) binding. The Proton acceptor role is filled by serine 529.

The protein belongs to the IlvD/Edd family. Homodimer. Requires [2Fe-2S] cluster as cofactor. Mg(2+) serves as cofactor.

The enzyme catalyses (2R)-2,3-dihydroxy-3-methylbutanoate = 3-methyl-2-oxobutanoate + H2O. It catalyses the reaction (2R,3R)-2,3-dihydroxy-3-methylpentanoate = (S)-3-methyl-2-oxopentanoate + H2O. The protein operates within amino-acid biosynthesis; L-isoleucine biosynthesis; L-isoleucine from 2-oxobutanoate: step 3/4. It participates in amino-acid biosynthesis; L-valine biosynthesis; L-valine from pyruvate: step 3/4. Functions in the biosynthesis of branched-chain amino acids. Catalyzes the dehydration of (2R,3R)-2,3-dihydroxy-3-methylpentanoate (2,3-dihydroxy-3-methylvalerate) into 2-oxo-3-methylpentanoate (2-oxo-3-methylvalerate) and of (2R)-2,3-dihydroxy-3-methylbutanoate (2,3-dihydroxyisovalerate) into 2-oxo-3-methylbutanoate (2-oxoisovalerate), the penultimate precursor to L-isoleucine and L-valine, respectively. This Psychrobacter arcticus (strain DSM 17307 / VKM B-2377 / 273-4) protein is Dihydroxy-acid dehydratase.